We begin with the raw amino-acid sequence, 362 residues long: Phosphoserine aminotransferase (362 aa).

The L-glutamate site is built by serine 9 and arginine 42. Residues 76–77 (GR), tryptophan 102, threonine 153, aspartate 174, and glutamine 197 each bind pyridoxal 5'-phosphate. Position 198 is an N6-(pyridoxal phosphate)lysine (lysine 198). 239–240 (NT) serves as a coordination point for pyridoxal 5'-phosphate.

Belongs to the class-V pyridoxal-phosphate-dependent aminotransferase family. SerC subfamily. In terms of assembly, homodimer. Pyridoxal 5'-phosphate is required as a cofactor.

The protein localises to the cytoplasm. The catalysed reaction is O-phospho-L-serine + 2-oxoglutarate = 3-phosphooxypyruvate + L-glutamate. It catalyses the reaction 4-(phosphooxy)-L-threonine + 2-oxoglutarate = (R)-3-hydroxy-2-oxo-4-phosphooxybutanoate + L-glutamate. Its pathway is amino-acid biosynthesis; L-serine biosynthesis; L-serine from 3-phospho-D-glycerate: step 2/3. It participates in cofactor biosynthesis; pyridoxine 5'-phosphate biosynthesis; pyridoxine 5'-phosphate from D-erythrose 4-phosphate: step 3/5. Catalyzes the reversible conversion of 3-phosphohydroxypyruvate to phosphoserine and of 3-hydroxy-2-oxo-4-phosphonooxybutanoate to phosphohydroxythreonine. The protein is Phosphoserine aminotransferase of Escherichia coli O127:H6 (strain E2348/69 / EPEC).